Here is a 239-residue protein sequence, read N- to C-terminus: Increased recombination centers protein 22-1 (239 aa).

An N-terminal signal peptide occupies residues 1–19; it reads MKLSTIFTAFAATIATVAG. Over 20-161 the chain is Lumenal; that stretch reads YETTGSKQTV…AAVSFFDPRL (142 aa). The helical transmembrane segment at 162 to 182 threads the bilayer; the sequence is IFLELVLLITFAGLIYVGYEI. Residues 183–239 are Cytoplasmic-facing; that stretch reads WGKQYFKGVAPVKAKKVSAAKASSPVASGPSTTSATGYDTNWIPESHLKQKKTKKVN. Residues 201-213 are compositionally biased toward low complexity; the sequence is AAKASSPVASGPS. The tract at residues 201 to 222 is disordered; the sequence is AAKASSPVASGPSTTSATGYDT.

This sequence belongs to the IRC22 family.

The protein resides in the endoplasmic reticulum membrane. In terms of biological role, is probably involved in a pathway contributing to genomic integrity. The sequence is that of Increased recombination centers protein 22-1 (IRC22-1) from Candida albicans (strain SC5314 / ATCC MYA-2876) (Yeast).